A 300-amino-acid chain; its full sequence is NAD kinase (300 aa).

Catalysis depends on Asp80, which acts as the Proton acceptor. NAD(+) is bound by residues 80-81, 154-155, Arg165, Arg182, Asp184, 195-200, and Gln253; these read DG, ND, and TAYALS.

The protein belongs to the NAD kinase family. Requires a divalent metal cation as cofactor.

The protein resides in the cytoplasm. The catalysed reaction is NAD(+) + ATP = ADP + NADP(+) + H(+). Functionally, involved in the regulation of the intracellular balance of NAD and NADP, and is a key enzyme in the biosynthesis of NADP. Catalyzes specifically the phosphorylation on 2'-hydroxyl of the adenosine moiety of NAD to yield NADP. The chain is NAD kinase from Aromatoleum aromaticum (strain DSM 19018 / LMG 30748 / EbN1) (Azoarcus sp. (strain EbN1)).